Consider the following 461-residue polypeptide: tRNA-2-methylthio-N(6)-dimethylallyladenosine synthase (461 aa).

One can recognise an MTTase N-terminal domain in the interval 25-143; the sequence is PTYSIITHGC…LPYLIDRHLS (119 aa). [4Fe-4S] cluster contacts are provided by C34, C70, C104, C179, C183, and C186. A Radical SAM core domain is found at 165–395; that stretch reads RDNEYVGYVN…LDVAYPIFYE (231 aa). One can recognise a TRAM domain in the interval 398 to 461; the sequence is KSYLGTIQEV…SFALTGEMVD (64 aa).

This sequence belongs to the methylthiotransferase family. MiaB subfamily. In terms of assembly, monomer. [4Fe-4S] cluster is required as a cofactor.

It localises to the cytoplasm. It carries out the reaction N(6)-dimethylallyladenosine(37) in tRNA + (sulfur carrier)-SH + AH2 + 2 S-adenosyl-L-methionine = 2-methylsulfanyl-N(6)-dimethylallyladenosine(37) in tRNA + (sulfur carrier)-H + 5'-deoxyadenosine + L-methionine + A + S-adenosyl-L-homocysteine + 2 H(+). In terms of biological role, catalyzes the methylthiolation of N6-(dimethylallyl)adenosine (i(6)A), leading to the formation of 2-methylthio-N6-(dimethylallyl)adenosine (ms(2)i(6)A) at position 37 in tRNAs that read codons beginning with uridine. In Finegoldia magna (strain ATCC 29328 / DSM 20472 / WAL 2508) (Peptostreptococcus magnus), this protein is tRNA-2-methylthio-N(6)-dimethylallyladenosine synthase.